The following is a 359-amino-acid chain: GTP cyclohydrolase FolE2 (359 aa).

Belongs to the GTP cyclohydrolase IV family.

The catalysed reaction is GTP + H2O = 7,8-dihydroneopterin 3'-triphosphate + formate + H(+). Its pathway is cofactor biosynthesis; 7,8-dihydroneopterin triphosphate biosynthesis; 7,8-dihydroneopterin triphosphate from GTP: step 1/1. Its function is as follows. Converts GTP to 7,8-dihydroneopterin triphosphate. This Cereibacter sphaeroides (strain ATCC 17025 / ATH 2.4.3) (Rhodobacter sphaeroides) protein is GTP cyclohydrolase FolE2.